The chain runs to 282 residues: Pantothenate synthetase (282 aa).

30–37 contributes to the ATP binding site; it reads MGYLHEGH. Catalysis depends on H37, which acts as the Proton donor. Position 61 (Q61) interacts with (R)-pantoate. Q61 contributes to the beta-alanine binding site. Residue 147 to 150 participates in ATP binding; sequence GMKD. Position 153 (Q153) interacts with (R)-pantoate. ATP contacts are provided by residues V176 and 184-187; that span reads KSSR.

It belongs to the pantothenate synthetase family. Homodimer.

The protein resides in the cytoplasm. It carries out the reaction (R)-pantoate + beta-alanine + ATP = (R)-pantothenate + AMP + diphosphate + H(+). The protein operates within cofactor biosynthesis; (R)-pantothenate biosynthesis; (R)-pantothenate from (R)-pantoate and beta-alanine: step 1/1. Its function is as follows. Catalyzes the condensation of pantoate with beta-alanine in an ATP-dependent reaction via a pantoyl-adenylate intermediate. The protein is Pantothenate synthetase of Bacillus cereus (strain B4264).